A 627-amino-acid chain; its full sequence is MCGICCSVSFSIEHFSKELKEDLLHNLRRRGPNSSRQLLKSAVNYQCLFSGHVLHLRGVLTIQPVEDEHGNVFLWNGEVFNGVKVEAEDNDTQVMFNSLSACKNESEILLLFSKVQGPWSFIYYQASSHHLWFGRDFFGRRSLLWQFSNLGKSFCLSSVGTQVYGVADQWQEVPASGIFQIDLNSAAVSRSVILKLYPWRYISKEDIAEECGNDLTQTPAGLPEFVSVVINEANLYLSKPVVPLNKKLPESPLEIQCRNSSSTSGTRETLEVFLTDEHTKKIVQQFIAILNVSVKRRILCLAREENLASKEVLKTCSSKANIAILFSGGVDSMVIAALADRHIPLDEPIDLLNVAFVPKQKTGLPIPNIERKQQNHHEIPSEESSQSPAADEGPGEAEVPDRVTGKAGLKELQSVNPSRTWNFVEINVSLEELQKLRRARICHLVQPLDTVLDDSIGCAVWFASRGIGWLVTQDAVRSYKSSAKVILTGIGADEQLAGYSRHRARFQSLGLEGLNEEIAMELGRISSRNLGRDDRVIGDHGKEARFPFLDENVVSFLNSLPVWEKVDLTLPRGVGEKLILRLAAMELGLPASALLPKRAIQFGSRIAKLEKSNEKASDKCGRLQILP.

The active-site For GATase activity is C2. Residues 2–184 (CGICCSVSFS…ASGIFQIDLN (183 aa)) form the Glutamine amidotransferase type-2 domain. One can recognise an Asparagine synthetase domain in the interval 308–597 (ASKEVLKTCS…GLPASALLPK (290 aa)). Residues 373–404 (QQNHHEIPSEESSQSPAADEGPGEAEVPDRVT) form a disordered region.

The polypeptide is Asparagine synthetase domain-containing protein 1 (Asnsd1) (Mus musculus (Mouse)).